Here is a 309-residue protein sequence, read N- to C-terminus: Formamidopyrimidine-DNA glycosylase (309 aa).

Proline 2 (schiff-base intermediate with DNA) is an active-site residue. Glutamate 3 functions as the Proton donor in the catalytic mechanism. Residue lysine 56 is the Proton donor; for beta-elimination activity of the active site. DNA-binding residues include histidine 106 and arginine 129. The segment at 271-305 adopts an FPG-type zinc-finger fold; sequence NVYGRQGNACPHCESTLENIKLNGRASVYCPLCQP. Arginine 295 (proton donor; for delta-elimination activity) is an active-site residue.

It belongs to the FPG family. Monomer. Requires Zn(2+) as cofactor.

It carries out the reaction Hydrolysis of DNA containing ring-opened 7-methylguanine residues, releasing 2,6-diamino-4-hydroxy-5-(N-methyl)formamidopyrimidine.. The catalysed reaction is 2'-deoxyribonucleotide-(2'-deoxyribose 5'-phosphate)-2'-deoxyribonucleotide-DNA = a 3'-end 2'-deoxyribonucleotide-(2,3-dehydro-2,3-deoxyribose 5'-phosphate)-DNA + a 5'-end 5'-phospho-2'-deoxyribonucleoside-DNA + H(+). Involved in base excision repair of DNA damaged by oxidation or by mutagenic agents. Acts as a DNA glycosylase that recognizes and removes damaged bases. Has a preference for oxidized purines, such as 7,8-dihydro-8-oxoguanine (8-oxoG). Has AP (apurinic/apyrimidinic) lyase activity and introduces nicks in the DNA strand. Cleaves the DNA backbone by beta-delta elimination to generate a single-strand break at the site of the removed base with both 3'- and 5'-phosphates. The protein is Formamidopyrimidine-DNA glycosylase of Psychrobacter arcticus (strain DSM 17307 / VKM B-2377 / 273-4).